We begin with the raw amino-acid sequence, 328 residues long: Cell cycle control protein 50A (328 aa).

Residues 1–28 (MAMNYSAKDEVDGGPTGPPGGAAKTRRP) form a disordered region. Ala2 carries the N-acetylalanine modification. The tract at residues 2–48 (AMNYSAKDEVDGGPTGPPGGAAKTRRPDNTAFKQQRLPAWQPILTAG) is required for ATPase and aminophospholipid flippase activity. At 2-49 (AMNYSAKDEVDGGPTGPPGGAAKTRRPDNTAFKQQRLPAWQPILTAGT) the chain is on the cytoplasmic side. Positions 49 to 315 (TVLPTFFIIG…LGVVLLVINH (267 aa)) are interaction with ATP8A2. The helical transmembrane segment at 50 to 70 (VLPTFFIIGLIFIPIGIGIFV) threads the bilayer. Residues 71–292 (TSNNIREIEG…SWMGGKNPFL (222 aa)) lie on the Exoplasmic loop side of the membrane. The disordered stretch occupies residues 102–125 (RDDSQLNGDPSALLNPSKECEPYR). Cysteines 121 and 135 form a disulfide. N-linked (GlcNAc...) asparagine glycosylation is found at Asn144 and Asn261. Residues 293–313 (GIAYITIGSISFLLGVVLLVI) traverse the membrane as a helical segment. The Cytoplasmic segment spans residues 314-328 (NHKYRNSSNTADITI).

The protein belongs to the CDC50/LEM3 family. Component of various P4-ATPase flippase complexes which consists of a catalytic alpha subunit and an accessory beta subunit. Interacts with ATP8A1 to form a flippase complex; this complex forms an intermediate phosphoenzyme. Interacts with ATP8A2 to form a flippase complex. TP8B1:TMEM30A and ATP8B2:TMEM30A flippase complexes have been shown to form intermediate phosphoenzymes in vitro. Interacts with alpha subunits ATP8A1, ATP8B1, ATP8B2, ATP8B4, ATP10A, ATP10B, ATP10D, ATP11A, ATP11B and ATP11C. In terms of processing, N-glycosylated. Contains high mannose-type oligosaccharides.

It localises to the membrane. It is found in the golgi apparatus. Its subcellular location is the cytoplasmic vesicle. The protein localises to the secretory vesicle membrane. The protein resides in the apical cell membrane. It localises to the photoreceptor inner segment. It is found in the cell projection. Its subcellular location is the cilium. The protein localises to the photoreceptor outer segment. In terms of biological role, accessory component of a P4-ATPase flippase complex which catalyzes the hydrolysis of ATP coupled to the transport of aminophospholipids from the outer to the inner leaflet of various membranes and ensures the maintenance of asymmetric distribution of phospholipids. Phospholipid translocation also seems to be implicated in vesicle formation and in uptake of lipid signaling molecules. The beta subunit may assist in binding of the phospholipid substrate. Required for the proper folding, assembly and ER to Golgi exit of the ATP8A2:TMEM30A flippase complex. ATP8A2:TMEM30A may be involved in regulation of neurite outgrowth, and, reconstituted to liposomes, predomiminantly transports phosphatidylserine (PS) and to a lesser extent phosphatidylethanolamine (PE). The ATP8A1:TMEM30A flippase complex seems to play a role in regulation of cell migration probably involving flippase-mediated translocation of phosphatidylethanolamine (PE) at the plasma membrane. Required for the formation of the ATP8A2, ATP8B1 and ATP8B2 P-type ATPAse intermediate phosphoenzymes. Involved in uptake of platelet-activating factor (PAF). Can also mediate the export of alpha subunits ATP8A1, ATP8B1, ATP8B2, ATP8B4, ATP10A, ATP10B, ATP10D, ATP11A, ATP11B and ATP11C from ER to other membrane localizations. In Rattus norvegicus (Rat), this protein is Cell cycle control protein 50A.